Consider the following 539-residue polypeptide: 4-hydroxybenzoate--CoA/benzoate--CoA ligase (539 aa).

It belongs to the ATP-dependent AMP-binding enzyme family. Benzoate-CoA ligase subfamily. In terms of assembly, homodimer. Post-translationally, the N-terminus is blocked.

It carries out the reaction 4-hydroxybenzoate + ATP + CoA = 4-hydroxybenzoyl-CoA + AMP + diphosphate. It catalyses the reaction benzoate + ATP + CoA = benzoyl-CoA + AMP + diphosphate. Its function is as follows. Catalyzes the ligation of 4-hydroxybenzoate, benzoate or cyclohex-1,4-dienecarboxylate and CoA at the expense of ATP. The enzyme shows low activity towards cyclo-2,5-dienecarboxylate, 4-fluorobenzoate, 4-chlorobenzoate and 2-methoxybenzoate. The protein is 4-hydroxybenzoate--CoA/benzoate--CoA ligase (hbaA) of Rhodopseudomonas palustris (strain ATCC BAA-98 / CGA009).